We begin with the raw amino-acid sequence, 868 residues long: Leucine--tRNA ligase (868 aa).

The 'HIGH' region motif lies at 42 to 52; it reads PYPSGKLHMGH. A 'KMSKS' region motif is present at residues 627–631; that stretch reads KMSKS. Residue Lys630 coordinates ATP.

The protein belongs to the class-I aminoacyl-tRNA synthetase family.

It is found in the cytoplasm. It catalyses the reaction tRNA(Leu) + L-leucine + ATP = L-leucyl-tRNA(Leu) + AMP + diphosphate. The chain is Leucine--tRNA ligase from Pseudomonas syringae pv. syringae (strain B728a).